Consider the following 299-residue polypeptide: DNA-binding transcriptional activator HetR (299 aa).

Residue Ser-152 is part of the active site.

The protein belongs to the peptidase S48 family. As to quaternary structure, homodimer; disulfide-linked.

Controls heterocyst differentiation. Dimerization is required for DNA-binding. Has both a protease and a DNA-binding activity. Increased expression leads to more heterocysts than usual. The sequence is that of DNA-binding transcriptional activator HetR from Nostoc punctiforme (strain ATCC 29133 / PCC 73102).